We begin with the raw amino-acid sequence, 312 residues long: Probable carboxylesterase 7 (312 aa).

Residue methionine 1 is modified to N-acetylmethionine. Positions 75–77 (HGG) match the Involved in the stabilization of the negatively charged intermediate by the formation of the oxyanion hole motif. Residues serine 159, aspartate 255, and histidine 287 contribute to the active site.

The protein belongs to the 'GDXG' lipolytic enzyme family. In terms of tissue distribution, expressed in leaves, stems, flowers and siliques.

It catalyses the reaction a carboxylic ester + H2O = an alcohol + a carboxylate + H(+). In terms of biological role, carboxylesterase acting on esters with varying acyl chain length. This chain is Probable carboxylesterase 7 (CXE7), found in Arabidopsis thaliana (Mouse-ear cress).